We begin with the raw amino-acid sequence, 461 residues long: Argininosuccinate lyase (461 aa).

This sequence belongs to the lyase 1 family. Argininosuccinate lyase subfamily.

The protein localises to the cytoplasm. The enzyme catalyses 2-(N(omega)-L-arginino)succinate = fumarate + L-arginine. It functions in the pathway amino-acid biosynthesis; L-arginine biosynthesis; L-arginine from L-ornithine and carbamoyl phosphate: step 3/3. The protein is Argininosuccinate lyase of Dehalococcoides mccartyi (strain CBDB1).